The chain runs to 185 residues: Elongation factor P (185 aa).

Belongs to the elongation factor P family.

The protein resides in the cytoplasm. Its pathway is protein biosynthesis; polypeptide chain elongation. Involved in peptide bond synthesis. Stimulates efficient translation and peptide-bond synthesis on native or reconstituted 70S ribosomes in vitro. Probably functions indirectly by altering the affinity of the ribosome for aminoacyl-tRNA, thus increasing their reactivity as acceptors for peptidyl transferase. The protein is Elongation factor P of Tropheryma whipplei (strain TW08/27) (Whipple's bacillus).